The following is a 578-amino-acid chain: ER degradation-enhancing alpha-mannosidase-like protein 2 (578 aa).

Residues 1–21 form the signal peptide; it reads MPFRLLIPLGLLCALLPQHHG. N90, N112, N289, and N450 each carry an N-linked (GlcNAc...) asparagine glycan. A disordered region spans residues 517-557; the sequence is KNTVSSGPWEPPARPGTLFSPENHDQARERKPAKQKVPLLS. Basic and acidic residues predominate over residues 538–548; sequence ENHDQARERKP.

Belongs to the glycosyl hydrolase 47 family. Post-translationally, N-glycosylated. In terms of tissue distribution, expressed ubiquitously in all tissues tested with slightly higher levels detected in small intestine and peripheral blood leukocytes and weakest levels in brain and skeletal muscle.

It localises to the endoplasmic reticulum lumen. Involved in the endoplasmic reticulum-associated degradation (ERAD) pathway that targets misfolded glycoproteins for degradation in an N-glycan-dependent manner. May initiate ERAD by promoting the first mannose trimming step of ERAD substrates, from Man9GlcNAc2 to Man8GlcNAc2. Seems to recognize and bind to exposed hydrophobic regions in target proteins. This is ER degradation-enhancing alpha-mannosidase-like protein 2 (EDEM2) from Homo sapiens (Human).